Here is a 221-residue protein sequence, read N- to C-terminus: Oxaloacetate tautomerase FAHD1, mitochondrial (221 aa).

The N-terminal 24 residues, 1–24 (MASTKPLSRFWEWGKNIVCVGRNY), are a transit peptide targeting the mitochondrion. An oxalate-binding site is contributed by Arg22. Ser37 bears the Phosphoserine mark. Mg(2+) is bound by residues Glu68, Glu70, and Asp99. Lys110 carries the N6-acetyllysine modification. Lys112 carries the post-translational modification N6-succinyllysine. Lys120 provides a ligand contact to oxalate.

This sequence belongs to the FAH family. In terms of assembly, homodimer. The cofactor is Mg(2+). It depends on Mn(2+) as a cofactor. As to expression, ubiquitous with higher expression in the liver and the kidney (at protein level).

The protein localises to the mitochondrion. The protein resides in the cytoplasm. It is found in the cytosol. The catalysed reaction is oxaloacetate = enol-oxaloacetate. It carries out the reaction oxaloacetate + H(+) = pyruvate + CO2. The enzyme catalyses a 3-acylpyruvate + H2O = a carboxylate + pyruvate + H(+). It catalyses the reaction acetylpyruvate + H2O = acetate + pyruvate + H(+). The catalysed reaction is 3-fumarylpyruvate + H2O = fumarate + pyruvate + H(+). With respect to regulation, oxaloacetate decarboxylation is potently and competitively inhibited by oxalate. Its function is as follows. Tautomerase that converts enol-oxaloacetate, a strong inhibitor of succinate dehydrogenase, to the physiological keto form of oxaloacetate. It is thereby required to maximize aerobic respiration efficiency by preventing succinate dehydrogenase inhibition. Also acts as a weak oxaloacetate decarboxylase (ODx), catalyzing the decarboxylation of oxaloacetate (OAA) to pyruvate and CO(2), and as such is likely a regulatory enzyme in the TCA cycle. Also displays acylpyruvase activity, being able to hydrolyze acetylpyruvate and fumarylpyruvate in vitro. The chain is Oxaloacetate tautomerase FAHD1, mitochondrial from Mus musculus (Mouse).